The sequence spans 1070 residues: DNA-directed RNA polymerase subunit beta (1070 aa).

Belongs to the RNA polymerase beta chain family. In terms of assembly, in plastids the minimal PEP RNA polymerase catalytic core is composed of four subunits: alpha, beta, beta', and beta''. When a (nuclear-encoded) sigma factor is associated with the core the holoenzyme is formed, which can initiate transcription.

It is found in the plastid. Its subcellular location is the chloroplast. It catalyses the reaction RNA(n) + a ribonucleoside 5'-triphosphate = RNA(n+1) + diphosphate. DNA-dependent RNA polymerase catalyzes the transcription of DNA into RNA using the four ribonucleoside triphosphates as substrates. This is DNA-directed RNA polymerase subunit beta from Platanus occidentalis (Sycamore).